Reading from the N-terminus, the 448-residue chain is Probable glycine dehydrogenase (decarboxylating) subunit 1 (448 aa).

The protein belongs to the GcvP family. N-terminal subunit subfamily. The glycine cleavage system is composed of four proteins: P, T, L and H. In this organism, the P 'protein' is a heterodimer of two subunits.

The catalysed reaction is N(6)-[(R)-lipoyl]-L-lysyl-[glycine-cleavage complex H protein] + glycine + H(+) = N(6)-[(R)-S(8)-aminomethyldihydrolipoyl]-L-lysyl-[glycine-cleavage complex H protein] + CO2. The glycine cleavage system catalyzes the degradation of glycine. The P protein binds the alpha-amino group of glycine through its pyridoxal phosphate cofactor; CO(2) is released and the remaining methylamine moiety is then transferred to the lipoamide cofactor of the H protein. This Anoxybacillus flavithermus (strain DSM 21510 / WK1) protein is Probable glycine dehydrogenase (decarboxylating) subunit 1.